We begin with the raw amino-acid sequence, 631 residues long: MPKIHELSETLTNQIAAGEVIERPASVVKELVENSLDAGATRIRVDFVDAGLKQIVVQDNGTGIARDQVDLAFTRHATSKISNEHDLFKVATLGFRGEALASISAVSHVEILTATKGAIGVKATFSGGNKKGQEDAAAREGTQITVRDLFFNTPARLKYLRSPRTEIMKIVDIINRLALGYPSVSFTLSNTGKVLLRTPGNGNLKQTVANVYGRHIAEKMEEFEAKDNDFKISGLMSKPELTRSTRNFVSILLNGRYIRNFQLNTAIMDGYGAKLAARHYPIIVLAIQVDPLLVDVNVHPTKQEVRLSKEKELSRLITSTISNVFIKKTEQTSAFANLENKRETLVDQLQFNLNQNVVNTARKKTPEIHENNEKPEFLAKPKKPEEEKTDYVDLNIPREDDKYIITKTWDKNVLLQQDLRPFSNTLCDSEVISSGDETLANNLPQLSYIGQIDTYIIAENNSDLFLIDQVAARRRLQFEKIYEMLLSKKIVQQGLLTPIVLEFGNLDFIQIKDKIDQIKQIGIYLEDFGQNSFIVRSYPTWIHNDVEETIRQILDGYLNLDKGKSENLFKRVAAMQAKRDISGKINLAAAEASQILIDLRKTEDPYHDADGRLVLVRMSENELKKMFKRDK.

The protein belongs to the DNA mismatch repair MutL/HexB family.

Functionally, this protein is involved in the repair of mismatches in DNA. It is required for dam-dependent methyl-directed DNA mismatch repair. May act as a 'molecular matchmaker', a protein that promotes the formation of a stable complex between two or more DNA-binding proteins in an ATP-dependent manner without itself being part of a final effector complex. The chain is DNA mismatch repair protein MutL from Lactobacillus acidophilus (strain ATCC 700396 / NCK56 / N2 / NCFM).